A 491-amino-acid chain; its full sequence is Serralysin (491 aa).

A propeptide spanning residues 1 to 16 (MGSFLLKKAVGLSNIS) is cleaved from the precursor. Zn(2+) is bound at residue histidine 186. The active site involves glutamate 187. Zn(2+) is bound by residues histidine 190, histidine 196, and tyrosine 226. Arginine 263, glycine 265, aspartate 295, glycine 297, glycine 298, aspartate 300, threonine 337, glutamate 339, glycine 344, glycine 346, aspartate 348, asparagine 353, alanine 355, asparagine 357, glycine 361, glycine 362, glycine 364, aspartate 366, glycine 370, glycine 373, aspartate 384, glycine 388, glycine 389, glycine 391, aspartate 402, aspartate 409, and aspartate 419 together coordinate Ca(2+). Hemolysin-type calcium-binding repeat units lie at residues 342–359 (IGGF…DNTL), 360–377 (IGGE…NNTI), and 378–395 (YGGR…SNTF).

It belongs to the peptidase M10B family. It depends on Ca(2+) as a cofactor. Zn(2+) serves as cofactor.

The protein localises to the secreted. The catalysed reaction is Preferential cleavage of bonds with hydrophobic residues in P1'.. Ca(2+) increases protease activity. One of the virulence factors produced during swarmer cell differentiation of the bacteria, which seems to be associated with pathogenesis. The protease activity is limited to IgA1, IgA2, as well as IgG degradation. The protein is Serralysin (zapA) of Proteus mirabilis.